A 309-amino-acid chain; its full sequence is Prepilin leader peptidase/N-methyltransferase (309 aa).

The chain crosses the membrane as a helical span at residues 35–55; the sequence is MQLAFAIVLGLVVGSFLNVVV. Zn(2+) is bound by residues Cys-96, Cys-99, Cys-121, and Cys-124. The next 6 helical transmembrane spans lie at 147 to 167, 183 to 203, 207 to 227, 230 to 250, 253 to 273, and 288 to 308; these read LALF…AALL, LTLP…FASL, VIGA…FKLL, IEGI…WLGW, LPQV…VATW, and FLAA…LLLG.

The protein belongs to the peptidase A24 family. The cofactor is Zn(2+).

The protein localises to the cell inner membrane. It catalyses the reaction Typically cleaves a -Gly-|-Phe- bond to release an N-terminal, basic peptide of 5-8 residues from type IV prepilin, and then N-methylates the new N-terminal amino group, the methyl donor being S-adenosyl-L-methionine.. Its function is as follows. Plays an essential role in type IV pili and type II pseudopili formation by proteolytically removing the leader sequence from substrate proteins and subsequently monomethylating the alpha-amino group of the newly exposed N-terminal phenylalanine. This is Prepilin leader peptidase/N-methyltransferase (gspO) from Burkholderia pseudomallei (strain 1026b).